A 61-amino-acid polypeptide reads, in one-letter code: Metallothionein-1B (61 aa).

The tract at residues 1–29 is beta; it reads MDPNCSCPTSGSCSCAGSCTCKACRCPSC. Positions 5, 7, 13, 15, 19, 21, 24, 26, 29, 33, 34, 36, 37, 41, 44, 48, 50, 57, 59, and 60 each coordinate a divalent metal cation. Residues 30–61 are alpha; that stretch reads KKSCCSCCPVGCAKCAQGCVCKGASDKCSCCA.

It belongs to the metallothionein superfamily. Type 1 family.

Its function is as follows. Metallothioneins have a high content of cysteine residues that bind various heavy metals; these proteins are transcriptionally regulated by both heavy metals and glucocorticoids. The protein is Metallothionein-1B (MT1B) of Ovis aries (Sheep).